The chain runs to 63 residues: Bowman-Birk type proteinase inhibitor (63 aa).

7 cysteine pairs are disulfide-bonded: Cys7-Cys60, Cys8-Cys23, Cys11-Cys56, Cys13-Cys21, Cys30-Cys37, Cys34-Cys49, and Cys39-Cys47.

In terms of assembly, monomer.

Functionally, inhibits trypsin stoichiometrically at the molar ratio of 1:2, with a dissociation constant of 4.2 nM. Does not inhibit chymotrypsin. The chain is Bowman-Birk type proteinase inhibitor from Lupinus albus (White lupine).